The following is a 390-amino-acid chain: Terminal nucleotidyltransferase 5C (390 aa).

The protein belongs to the TENT family.

Its subcellular location is the nucleus. It localises to the cytoplasm. The protein resides in the cytoskeleton. The protein localises to the microtubule organizing center. It is found in the centrosome. It catalyses the reaction RNA(n) + ATP = RNA(n)-3'-adenine ribonucleotide + diphosphate. Catalyzes the transfer of one adenosine molecule from an ATP to an mRNA poly(A) tail bearing a 3'-OH terminal group and enhances mRNA stability and gene expression. The chain is Terminal nucleotidyltransferase 5C from Gallus gallus (Chicken).